Consider the following 823-residue polypeptide: Protein Jade-3 (823 aa).

The tract at residues 1 to 32 (MKRHRPVSSSDSSDESPSTSFTSGSMYRIKSK) is disordered. The span at 8–25 (SSSDSSDESPSTSFTSGS) shows a compositional bias: low complexity. Residues Lys30 and Lys32 each carry the N6-acetyllysine modification. Residue Ser85 is modified to Phosphoserine. Residues 200–250 (DVICDVCRSPDSEEGNDMVFCDKCNVCVHQACYGILKVPEGSWLCRSCVLG) form a PHD-type 1 zinc finger. The C2HC pre-PHD-type zinc finger occupies 252-286 (YPQCVLCPKKGGALKTTKTGTKWAHVSCALWIPEV). The PHD-type 2 zinc finger occupies 310–366 (LVCNLCKLKTGACIQCSIKSCITAFHVTCAFEHGLEMKTILDEGDEVKFKSYCLKHS). Disordered stretches follow at residues 372–395 (LGEA…KTSL) and 542–576 (KLKM…VHSI). Positions 561 to 575 (DQQPHSPDSSSSVHS) are enriched in low complexity. Ser566 bears the Phosphoserine mark. The residue at position 601 (Lys601) is an N6-acetyllysine. Position 608 is a phosphoserine (Ser608). Residues 609-630 (LSHSRSEAKESSPAWRTPSSEC) are disordered. Lys638 is modified (N6-acetyllysine). Composition is skewed to polar residues over residues 650–664 (SSIG…SKFA) and 673–684 (WSGNVTQKDSSS). The tract at residues 650-684 (SSIGNGKSQPNSKFAKSNGLEGSWSGNVTQKDSSS) is disordered. Residue Lys735 is modified to N6-acetyllysine. The interval 758–823 (RAPYQENDGY…HPLSHSSMQR (66 aa)) is disordered. A phosphoserine mark is found at Ser774, Ser776, and Ser780. Residues 781–809 (DGNKEKVRVRKDSSDRENPPHDSRRDCHG) are compositionally biased toward basic and acidic residues.

It belongs to the JADE family. As to quaternary structure, component of the HBO1 complex composed at least of ING4 or ING5, KAT7/HBO1, MEAF6, and one of JADE1, JADE2 and JADE3. As to expression, ubiquitously expressed, with highest levels in placenta and uterus.

Its function is as follows. Scaffold subunit of some HBO1 complexes, which have a histone H4 acetyltransferase activity. The protein is Protein Jade-3 (JADE3) of Homo sapiens (Human).